Reading from the N-terminus, the 186-residue chain is Ribonuclease M5 (186 aa).

Positions 6-89 (SQVIVVEGRD…AFLKRDEAVP (84 aa)) constitute a Toprim domain. Glutamate 12, aspartate 58, and aspartate 60 together coordinate Mg(2+).

It belongs to the ribonuclease M5 family. The cofactor is Mg(2+).

It localises to the cytoplasm. The catalysed reaction is Endonucleolytic cleavage of RNA, removing 21 and 42 nucleotides, respectively, from the 5'- and 3'-termini of a 5S-rRNA precursor.. Required for correct processing of both the 5' and 3' ends of 5S rRNA precursor. Cleaves both sides of a double-stranded region yielding mature 5S rRNA in one step. The polypeptide is Ribonuclease M5 (Streptococcus pneumoniae (strain ATCC BAA-255 / R6)).